The following is a 354-amino-acid chain: Guanine nucleotide-binding protein G(o) subunit alpha (354 aa).

Residue glycine 2 is the site of N-myristoyl glycine attachment. The S-palmitoyl cysteine moiety is linked to residue cysteine 3. Residues 32–354 (KDVKLLLLGA…ANNLRGCGLY (323 aa)) enclose the G-alpha domain. The tract at residues 35 to 48 (KLLLLGAGESGKST) is G1 motif. Positions 43, 46, 47, 48, 152, 176, 177, 178, and 179 each coordinate GTP. Serine 47 provides a ligand contact to Mg(2+). Positions 174–182 (DILRTRVKT) are G2 motif. Threonine 182 contacts Mg(2+). The G3 motif stretch occupies residues 197–206 (FRLFDVGGQR). Position 205 is a 5-glutamyl histamine (glutamine 205). Positions 266–273 (ILFLNKKD) are G4 motif. Residues asparagine 270, aspartate 273, and cysteine 325 each contribute to the GTP site. Residues 324–329 (TCATDT) are G5 motif. Position 346 is a deamidated asparagine; in form Alpha-3 (asparagine 346). Residue cysteine 351 is the site of S-palmitoyl cysteine attachment.

Belongs to the G-alpha family. G(i/o/t/z) subfamily. G proteins are composed of 3 units; alpha, beta and gamma. The alpha chain contains the guanine nucleotide binding site. Forms a complex with GNB1 and GNG3. Interacts with RGS14. Interacts with RGS16. Interacts with RGS19. Interacts (when palmitoylated) with ADGRG3. Deamidation of Asn-346 converts alpha-1 to alpha-3. In terms of processing, histaminylated at Gln-205 residues by TGM2.

The protein resides in the cell membrane. It localises to the membrane. It carries out the reaction GTP + H2O = GDP + phosphate + H(+). The GTPase activity is promoted by GTPAse activators, such as RGS14, RGS16 and RGS19. Functionally, guanine nucleotide-binding proteins (G proteins) function as transducers downstream of G protein-coupled receptors (GPCRs) in numerous signaling cascades. The alpha chain contains the guanine nucleotide binding site and alternates between an active, GTP-bound state and an inactive, GDP-bound state. Signaling by an activated GPCR promotes GDP release and GTP binding. The alpha subunit has a low GTPase activity that converts bound GTP to GDP, thereby terminating the signal. Both GDP release and GTP hydrolysis are modulated by numerous regulatory proteins. Signaling is mediated via effector proteins, such as adenylate cyclase. Inhibits adenylate cyclase activity, leading to decreased intracellular cAMP levels. In Cricetulus longicaudatus (Long-tailed dwarf hamster), this protein is Guanine nucleotide-binding protein G(o) subunit alpha (GNAO1).